Here is a 275-residue protein sequence, read N- to C-terminus: TATA-box-binding protein (275 aa).

Disordered stretches follow at residues 23 to 45 (EDES…FGMN) and 73 to 92 (GSMS…HTPA). 2 repeat units span residues 103 to 179 (LENI…ARIV) and 193 to 270 (IQNM…YPIL).

Belongs to the TBP family. As to quaternary structure, belongs to the TFIID complex together with the TBP-associated factors (TAFs). Binds DNA as monomer.

It is found in the nucleus. General transcription factor that functions at the core of the DNA-binding multiprotein factor TFIID. Binding of TFIID to the TATA box is the initial transcriptional step of the pre-initiation complex (PIC), playing a role in the activation of eukaryotic genes transcribed by RNA polymerase II. This Artemia franciscana (Brine shrimp) protein is TATA-box-binding protein.